Here is a 422-residue protein sequence, read N- to C-terminus: 2,3-bisphosphoglycerate-independent phosphoglycerate mutase (422 aa).

Residues 173-194 (DADPKRVGKPVKDVKPTSDDPA) form a disordered region. Over residues 174–190 (ADPKRVGKPVKDVKPTS) the composition is skewed to basic and acidic residues.

The protein belongs to the BPG-independent phosphoglycerate mutase family. A-PGAM subfamily.

It carries out the reaction (2R)-2-phosphoglycerate = (2R)-3-phosphoglycerate. It participates in carbohydrate degradation; glycolysis; pyruvate from D-glyceraldehyde 3-phosphate: step 3/5. Catalyzes the interconversion of 2-phosphoglycerate and 3-phosphoglycerate. This chain is 2,3-bisphosphoglycerate-independent phosphoglycerate mutase, found in Methanopyrus kandleri (strain AV19 / DSM 6324 / JCM 9639 / NBRC 100938).